A 205-amino-acid polypeptide reads, in one-letter code: MVSGSGIAAKRVVVDARHHMLGRLASIVAKELLNGQKVVIVRSEEICISGGLVRQKMKYLRFLRKRMNTKPSHGPIHCAPSKIFWRTVRGMIPHKTKRGEHALARLKVYEGIPPPFDKQKRLVVPDALKVLRLQKGHKYCLLGQLSSEVGWNYYDTIKELEKKRKERSQVVYERKKQLNKLRVKAEQVAQEKLGSQLDILAPVKY.

This sequence belongs to the universal ribosomal protein uL13 family.

This Lupinus luteus (European yellow lupine) protein is Large ribosomal subunit protein uL13 (RPL13A).